The sequence spans 366 residues: 3-dehydroquinate synthase (366 aa).

Residues 69–74 (DGEAHK), 103–107 (GVIGD), 127–128 (TT), Lys140, Lys149, and 167–170 (TLNT) contribute to the NAD(+) site. Positions 182, 245, and 262 each coordinate Zn(2+).

This sequence belongs to the sugar phosphate cyclases superfamily. Dehydroquinate synthase family. Co(2+) serves as cofactor. The cofactor is Zn(2+). NAD(+) is required as a cofactor.

The protein resides in the cytoplasm. It carries out the reaction 7-phospho-2-dehydro-3-deoxy-D-arabino-heptonate = 3-dehydroquinate + phosphate. The protein operates within metabolic intermediate biosynthesis; chorismate biosynthesis; chorismate from D-erythrose 4-phosphate and phosphoenolpyruvate: step 2/7. In terms of biological role, catalyzes the conversion of 3-deoxy-D-arabino-heptulosonate 7-phosphate (DAHP) to dehydroquinate (DHQ). The sequence is that of 3-dehydroquinate synthase from Pseudomonas fluorescens (strain SBW25).